A 1002-amino-acid chain; its full sequence is MSKGGEHKRVTLTSIIQGDAGFSRFGSNILEPDAASAAPDNSSKPTTKTAKCIRIKLDLFETDSNKYPEFNYSRLLYLEKKKTKKLKQVSTTNGSASTDPFADNDDDVARIVKELEAKYGNSYATGRGKSKKDDYRDIGMGYDESDSFIDNTEAYDEIIPEEAETLEGGFYINCGALEFKNLTKKSYTTRTDAIIKMPERSRKRMVSSSSESSSSSSGDDDENDDGNNEEDDESDSEDDSEENDESDSEDDSESESLEDEDSAATAKSSSKYKDNHQAKRAKVIVTGKSKPSSSSLTSGKKPPTKPITTSSSSNSPRPSTVEISDTEDGQDPIQTQPSSQLQSLPQSQAQAQALKKVVKTTTVKDMLKAKRDSFLKSQSGTAAVKGVGNGELKCVSTDVSSSDSSDMESEHGRADRQAGQHGKDGQENLRTADTLLPTTLDADIVTAVNSFKEAVKSRDMCGKKFNLDVKLSPLLLRVYEAVLCTDRNERNMVFSHIEYQLQLPKYYMLRKGKQVRAKEEKRKSTIMLEKLRRAVAVVMPKAVANYETELRTFAEQAAADVNSELPPKMPRKKFQWTSELRHLLYDVYQARWTSYAFLAKRKESLEEFINWYLKEKVVELWPPGWMRLDELQREITRYKNAKLKAKEKPKAPPASASPKPVGVVSAPEQMPPASSYLKAVEDPRSRGNSDTDSATSASSNSLKRKLKEMPKQTSKPPKKKVAKQVPLQPQLTPHPQFQLAPAATAAVSIPAISNNNNHLPHLDTLLSMPSTSAQAAALNAAAVAAASTVLDLASPSRKIDLNTSNNFYNLITAASLAASGNPSPHSGDGQAKVIVGARPSPHVINLDDYQCTSDILQTSKQLAATTTVITAISKAAQTTSVARESSSESDGVEIVGVFPASKPQKKVQSKPKNKTQNRGRSSLGAVGQVNGSLGYSANNMYIYNSPRTLGPVYDLTDPHIMKTMSNLKEMEKQFIQAAFSPNSVKGASGGMGSSAPSTPTRQ.

Positions 80–85 match the Nuclear localization signal motif; that stretch reads KKKTKK. 3 disordered regions span residues 193-358, 395-428, and 642-725; these read AIIK…KKVV, VSTD…GQEN, and KLKA…AKQV. A compositionally biased stretch (low complexity) spans 207-217; that stretch reads SSSSESSSSSS. The segment covering 218–262 has biased composition (acidic residues); sequence GDDDENDDGNNEEDDESDSEDDSEENDESDSEDDSESESLEDEDS. 2 repeat units span residues 230-241 and 242-253. The segment at 230–253 is 2 X 12 AA tandem repeats; the sequence is EDDESDSEDDSEENDESDSEDDSE. Low complexity-rich tracts occupy residues 286-320, 336-358, and 395-404; these read TGKS…RPST, QPSS…KKVV, and VSTDVSSSDS. Residues 408–427 are compositionally biased toward basic and acidic residues; sequence ESEHGRADRQAGQHGKDGQE. A compositionally biased stretch (low complexity) spans 653 to 667; it reads PASASPKPVGVVSAP. The span at 679–689 shows a compositional bias: basic and acidic residues; that stretch reads AVEDPRSRGNS. 2 positions are modified to phosphoserine: Ser685 and Ser689. Residues 690–701 show a composition bias toward low complexity; sequence DTDSATSASSNS. Residues Ser885, Ser886, and Ser887 each carry the phosphoserine modification. Positions 901–928 are disordered; that stretch reads SKPQKKVQSKPKNKTQNRGRSSLGAVGQ. Positions 903–917 are enriched in basic residues; the sequence is PQKKVQSKPKNKTQN.

The N-terminus is blocked. In terms of tissue distribution, oocyte specific.

It is found in the nucleus. The protein resides in the nucleoplasm. The protein localises to the chromosome. Its subcellular location is the centromere. It localises to the kinetochore. May play a key role in egg organization. May be a transcriptional regulator having a role in chromatin remodeling in concert with Hira, a histone chaperone. Involved in chromosome segregation by affecting kinetochores function in the first meiotic division. This Drosophila melanogaster (Fruit fly) protein is yemanuclein.